The chain runs to 166 residues: Regulatory protein RecX (166 aa).

This sequence belongs to the RecX family.

It is found in the cytoplasm. In terms of biological role, modulates RecA activity. The protein is Regulatory protein RecX of Klebsiella pneumoniae (strain 342).